The sequence spans 61 residues: Alpha-conotoxine-like Am1.3 (61 aa).

The N-terminal stretch at 1–21 is a signal peptide; it reads MGMRMMFTVFLLVVLATTVVS. The propeptide occupies 22–44; the sequence is FMSGRASHGRNAAASDLIALTIK. The residue at position 60 (Cys60) is a Cysteine amide.

It belongs to the conotoxin A superfamily. Is not hydroxylated. In terms of processing, contains 2 disulfide bonds. As to expression, expressed by the venom duct.

Its subcellular location is the secreted. Alpha-conotoxins act on postsynaptic membranes, they bind to the nicotinic acetylcholine receptors (nAChR) and thus inhibit them. This Conus amadis (Amadis cone) protein is Alpha-conotoxine-like Am1.3.